Consider the following 143-residue polypeptide: Anti-sigma F factor (143 aa).

Belongs to the anti-sigma-factor family.

The enzyme catalyses L-seryl-[protein] + ATP = O-phospho-L-seryl-[protein] + ADP + H(+). It carries out the reaction L-threonyl-[protein] + ATP = O-phospho-L-threonyl-[protein] + ADP + H(+). In terms of biological role, binds to sigma F and blocks its ability to form an RNA polymerase holoenzyme (E-sigma F). Phosphorylates SpoIIAA on a serine residue. This phosphorylation may enable SpoIIAA to act as an anti-anti-sigma factor that counteracts SpoIIAB and thus releases sigma F from inhibition. This chain is Anti-sigma F factor, found in Clostridium acetobutylicum (strain ATCC 824 / DSM 792 / JCM 1419 / IAM 19013 / LMG 5710 / NBRC 13948 / NRRL B-527 / VKM B-1787 / 2291 / W).